We begin with the raw amino-acid sequence, 362 residues long: Probable aromatic amino acid hydroxylase (362 aa).

2 residues coordinate Fe cation: H200 and H205.

The protein belongs to the biopterin-dependent aromatic amino acid hydroxylase family. Fe(2+) serves as cofactor.

The polypeptide is Probable aromatic amino acid hydroxylase (Chlamydia pneumoniae (Chlamydophila pneumoniae)).